Reading from the N-terminus, the 223-residue chain is Large ribosomal subunit protein uL3 (223 aa).

Residues 137–157 are disordered; that stretch reads GRASHGNSRSHNVPGSIGMAQ. Gln157 is subject to N5-methylglutamine.

It belongs to the universal ribosomal protein uL3 family. In terms of assembly, part of the 50S ribosomal subunit. Forms a cluster with proteins L14 and L19. Post-translationally, methylated by PrmB.

In terms of biological role, one of the primary rRNA binding proteins, it binds directly near the 3'-end of the 23S rRNA, where it nucleates assembly of the 50S subunit. This chain is Large ribosomal subunit protein uL3, found in Burkholderia pseudomallei (strain 1106a).